Here is a 306-residue protein sequence, read N- to C-terminus: Foldase protein PrsA (306 aa).

A signal peptide spans 1 to 20; that stretch reads MRRKIALFLALIFVGVSLVS. Cys-21 is lipidated: N-palmitoyl cysteine. Cys-21 carries S-diacylglycerol cysteine lipidation. The 91-residue stretch at 165 to 255 folds into the PpiC domain; that stretch reads FEVMRARHIL…YGYHIIKSEG (91 aa).

Belongs to the PrsA family.

The protein localises to the cell membrane. The catalysed reaction is [protein]-peptidylproline (omega=180) = [protein]-peptidylproline (omega=0). Its function is as follows. Plays a major role in protein secretion by helping the post-translocational extracellular folding of several secreted proteins. This is Foldase protein PrsA from Caldanaerobacter subterraneus subsp. tengcongensis (strain DSM 15242 / JCM 11007 / NBRC 100824 / MB4) (Thermoanaerobacter tengcongensis).